Here is a 156-residue protein sequence, read N- to C-terminus: Ribonuclease pancreatic (156 aa).

The signal sequence occupies residues 1–28 (MALEKSLVLLPLLVLILLVLGWVQPSLG). The span at 33-43 (AKKFQRQHMDS) shows a compositional bias: basic and acidic residues. A disordered region spans residues 33 to 52 (AKKFQRQHMDSDSSPSSNST). Substrate is bound by residues lysine 35 and arginine 38. Catalysis depends on histidine 40, which acts as the Proton acceptor. Residues asparagine 50 and asparagine 62 are each glycosylated (N-linked (GlcNAc...) asparagine). Intrachain disulfides connect cysteine 54/cysteine 112, cysteine 68/cysteine 123, cysteine 86/cysteine 138, and cysteine 93/cysteine 100. Substrate contacts are provided by residues 69–73 (KPVNT) and lysine 94. N-linked (GlcNAc...) asparagine glycosylation occurs at asparagine 104. Arginine 113 provides a ligand contact to substrate. N-linked (GlcNAc...) asparagine glycosylation is present at asparagine 116. Histidine 147 serves as the catalytic Proton donor.

This sequence belongs to the pancreatic ribonuclease family. As to quaternary structure, monomer. Interacts with and forms tight 1:1 complexes with RNH1. Dimerization of two such complexes may occur. Interaction with RNH1 inhibits this protein.

It is found in the secreted. The catalysed reaction is an [RNA] containing cytidine + H2O = an [RNA]-3'-cytidine-3'-phosphate + a 5'-hydroxy-ribonucleotide-3'-[RNA].. It catalyses the reaction an [RNA] containing uridine + H2O = an [RNA]-3'-uridine-3'-phosphate + a 5'-hydroxy-ribonucleotide-3'-[RNA].. In terms of biological role, endonuclease that catalyzes the cleavage of RNA on the 3' side of pyrimidine nucleotides. Acts on single-stranded and double-stranded RNA. This chain is Ribonuclease pancreatic (RNASE1), found in Gorilla gorilla gorilla (Western lowland gorilla).